The sequence spans 1109 residues: Carbamoyl phosphate synthase large chain (1109 aa).

The interval 1–402 (MPKRTDLKSV…ALQKALRSLE (402 aa)) is carboxyphosphate synthetic domain. ATP contacts are provided by Arg-129, Arg-169, Gly-175, Gly-176, Glu-208, Ile-210, Glu-215, Gly-241, Val-242, His-243, Gln-285, and Glu-299. In terms of domain architecture, ATP-grasp 1 spans 133–328 (KGVVERCGAE…IAKIATKLSL (196 aa)). Mg(2+) contacts are provided by Gln-285, Glu-299, and Asn-301. Residues Gln-285, Glu-299, and Asn-301 each coordinate Mn(2+). Residues 403 to 546 (QKGSQLDFSS…YHYSAYDEED (144 aa)) form an oligomerization domain region. The tract at residues 547 to 950 (EVALHSKPSI…AFAKSQAGAN (404 aa)) is carbamoyl phosphate synthetic domain. The region spanning 677–868 (SRVLDKAGLV…MAKAAALIGT (192 aa)) is the ATP-grasp 2 domain. Residues Arg-713, Arg-752, Leu-754, Glu-759, Gly-784, Ile-785, His-786, Ser-787, Gln-827, and Glu-839 each contribute to the ATP site. Positions 827, 839, and 841 each coordinate Mg(2+). Mn(2+) contacts are provided by Gln-827, Glu-839, and Asn-841. Residues 951-1096 (NALPTEGKVF…QEHAAALGES (146 aa)) form the MGS-like domain. Residues 951 to 1109 (NALPTEGKVF…AAAKADLQHA (159 aa)) are allosteric domain.

The protein belongs to the CarB family. Composed of two chains; the small (or glutamine) chain promotes the hydrolysis of glutamine to ammonia, which is used by the large (or ammonia) chain to synthesize carbamoyl phosphate. Tetramer of heterodimers (alpha,beta)4. The cofactor is Mg(2+). Mn(2+) is required as a cofactor.

It catalyses the reaction hydrogencarbonate + L-glutamine + 2 ATP + H2O = carbamoyl phosphate + L-glutamate + 2 ADP + phosphate + 2 H(+). The catalysed reaction is hydrogencarbonate + NH4(+) + 2 ATP = carbamoyl phosphate + 2 ADP + phosphate + 2 H(+). It participates in amino-acid biosynthesis; L-arginine biosynthesis; carbamoyl phosphate from bicarbonate: step 1/1. Its pathway is pyrimidine metabolism; UMP biosynthesis via de novo pathway; (S)-dihydroorotate from bicarbonate: step 1/3. In terms of biological role, large subunit of the glutamine-dependent carbamoyl phosphate synthetase (CPSase). CPSase catalyzes the formation of carbamoyl phosphate from the ammonia moiety of glutamine, carbonate, and phosphate donated by ATP, constituting the first step of 2 biosynthetic pathways, one leading to arginine and/or urea and the other to pyrimidine nucleotides. The large subunit (synthetase) binds the substrates ammonia (free or transferred from glutamine from the small subunit), hydrogencarbonate and ATP and carries out an ATP-coupled ligase reaction, activating hydrogencarbonate by forming carboxy phosphate which reacts with ammonia to form carbamoyl phosphate. This Pseudarthrobacter chlorophenolicus (strain ATCC 700700 / DSM 12829 / CIP 107037 / JCM 12360 / KCTC 9906 / NCIMB 13794 / A6) (Arthrobacter chlorophenolicus) protein is Carbamoyl phosphate synthase large chain.